The primary structure comprises 37 residues: MKIRASVRKICENCRLIRRRKRVMVVCSNPKHKQKQG.

This sequence belongs to the bacterial ribosomal protein bL36 family.

Its subcellular location is the plastid. This chain is Large ribosomal subunit protein bL36c, found in Aneura mirabilis (Parasitic liverwort).